The sequence spans 40 residues: Photosystem II reaction center protein J (40 aa).

The helical transmembrane segment at 8-28 (IPLWIIGTVAGIVVIGLIGLF) threads the bilayer.

This sequence belongs to the PsbJ family. As to quaternary structure, PSII is composed of 1 copy each of membrane proteins PsbA, PsbB, PsbC, PsbD, PsbE, PsbF, PsbH, PsbI, PsbJ, PsbK, PsbL, PsbM, PsbT, PsbX, PsbY, PsbZ, Psb30/Ycf12, at least 3 peripheral proteins of the oxygen-evolving complex and a large number of cofactors. It forms dimeric complexes.

The protein localises to the plastid. Its subcellular location is the chloroplast thylakoid membrane. Its function is as follows. One of the components of the core complex of photosystem II (PSII). PSII is a light-driven water:plastoquinone oxidoreductase that uses light energy to abstract electrons from H(2)O, generating O(2) and a proton gradient subsequently used for ATP formation. It consists of a core antenna complex that captures photons, and an electron transfer chain that converts photonic excitation into a charge separation. The polypeptide is Photosystem II reaction center protein J (Pisum sativum (Garden pea)).